Consider the following 480-residue polypeptide: Wax ester synthase/diacylglycerol acyltransferase 7 (480 aa).

The Cytoplasmic portion of the chain corresponds to 1–193; it reads MTYGEEEPVS…LRSIFTIGST (193 aa). H135 serves as the catalytic Proton acceptor. The helical transmembrane segment at 194 to 214 threads the bilayer; sequence MRLLWNTTIDMLLLLATVLFL. The Lumenal portion of the chain corresponds to 215-329; sequence KDTKTPLKAG…VKDSKCRWGN (115 aa). N252 carries N-linked (GlcNAc...) asparagine glycosylation. Residues 330–350 form a helical membrane-spanning segment; sequence YFSFIFLPFTIGLQTDPLVYL. Topologically, residues 351-365 are cytoplasmic; it reads KMSKSMMARKKHSYH. The helical transmembrane segment at 366–386 threads the bilayer; the sequence is AALVYFIIKIVLKVFGAKAAA. Residues 387–480 lie on the Lumenal side of the membrane; sequence ELFDRPVRNT…KASLCERGLL (94 aa). N-linked (GlcNAc...) asparagine glycosylation occurs at N395.

It in the N-terminal section; belongs to the long-chain O-acyltransferase family. As to expression, expressed in roots, stems, leaves, flowers and siliques.

The protein localises to the cell membrane. Its subcellular location is the endoplasmic reticulum membrane. It is found in the golgi apparatus membrane. It carries out the reaction an acyl-CoA + a 1,2-diacyl-sn-glycerol = a triacyl-sn-glycerol + CoA. The catalysed reaction is a long chain fatty alcohol + a fatty acyl-CoA = a wax ester + CoA. Its pathway is glycerolipid metabolism; triacylglycerol biosynthesis. It participates in lipid metabolism. Functionally, bifunctional wax ester synthase/diacylglycerol acyltransferase that uses acyl-CoAs with 14, 16 and 18 carbons as substrates, preferably in combination with 16:0ol alcohol. Involved in cuticular wax biosynthesis. The sequence is that of Wax ester synthase/diacylglycerol acyltransferase 7 from Arabidopsis thaliana (Mouse-ear cress).